Here is a 110-residue protein sequence, read N- to C-terminus: Large ribosomal subunit protein uL22 (110 aa).

It belongs to the universal ribosomal protein uL22 family. In terms of assembly, part of the 50S ribosomal subunit.

Functionally, this protein binds specifically to 23S rRNA; its binding is stimulated by other ribosomal proteins, e.g. L4, L17, and L20. It is important during the early stages of 50S assembly. It makes multiple contacts with different domains of the 23S rRNA in the assembled 50S subunit and ribosome. Its function is as follows. The globular domain of the protein is located near the polypeptide exit tunnel on the outside of the subunit, while an extended beta-hairpin is found that lines the wall of the exit tunnel in the center of the 70S ribosome. The protein is Large ribosomal subunit protein uL22 of Cellvibrio japonicus (strain Ueda107) (Pseudomonas fluorescens subsp. cellulosa).